A 762-amino-acid chain; its full sequence is Protein PHTF1 (762 aa).

One can recognise a PHTF domain in the interval 6–150 (RDAISWYQKK…VHCQIVSTQI (145 aa)). 3 helical membrane passes run 77-97 (GLVRVVFFPLFSSWWIQVTSL), 99-119 (IFVWLLLLYLMQVIALVLYFM), and 121-141 (PIVNVSEVLGPLCLMLLMGTV). Positions 152–188 (RPSGNNGNRRRRKLRKTVNGDGSRENGNNSSDKARGV) are disordered. 3 N-linked (GlcNAc...) asparagine glycosylation sites follow: Asn-179, Asn-180, and Asn-197. Phosphoserine is present on residues Ser-272, Ser-276, Ser-277, Ser-334, and Ser-336. Disordered regions lie at residues 344–379 (SAAFSQGSRSGMSGGSRSLNMLRRDSESTRHDSETE) and 393–415 (RSSVTSDSEGAHVSSLHSGTKRD). The segment covering 348–361 (SQGSRSGMSGGSRS) has biased composition (low complexity). The segment covering 365 to 376 (LRRDSESTRHDS) has biased composition (basic and acidic residues). Residue Asn-431 is glycosylated (N-linked (GlcNAc...) asparagine). The next 4 membrane-spanning stretches (helical) occupy residues 473-493 (GVGYQMLGNIVTIGLAFFPFL), 512-532 (EILTLFCGAPPVTPIIILSII), 611-631 (VVVSSVFLLTLSIAFICCAQV), and 645-665 (WEFLIWESALLLFLLRLASLG). Residues Asn-674 and Asn-733 are each glycosylated (N-linked (GlcNAc...) asparagine). The helical transmembrane segment at 737–757 (VVILSAVSGVISDLLGFNIRL) threads the bilayer.

Interacts with FEM1B.

The protein localises to the endoplasmic reticulum membrane. Its subcellular location is the golgi apparatus. It localises to the cis-Golgi network membrane. This Bos taurus (Bovine) protein is Protein PHTF1 (PHTF1).